Consider the following 626-residue polypeptide: Putative Xaa-Pro dipeptidyl-peptidase (626 aa).

Catalysis depends on charge relay system residues Ser231, Asp348, and His379.

Belongs to the peptidase S15 family.

It catalyses the reaction Hydrolyzes Xaa-Pro-|- bonds to release unblocked, N-terminal dipeptides from substrates including Ala-Pro-|-p-nitroanilide and (sequentially) Tyr-Pro-|-Phe-Pro-|-Gly-Pro-|-Ile.. The sequence is that of Putative Xaa-Pro dipeptidyl-peptidase from Rhodopirellula baltica (strain DSM 10527 / NCIMB 13988 / SH1).